We begin with the raw amino-acid sequence, 185 residues long: Ribosome-recycling factor (185 aa).

It belongs to the RRF family.

The protein localises to the cytoplasm. Functionally, responsible for the release of ribosomes from messenger RNA at the termination of protein biosynthesis. May increase the efficiency of translation by recycling ribosomes from one round of translation to another. The protein is Ribosome-recycling factor of Wolbachia pipientis subsp. Culex pipiens (strain wPip).